Reading from the N-terminus, the 344-residue chain is Fibronectin type 3 and ankyrin repeat domains 1 protein (344 aa).

Residues 11 to 108 (KPHPPVVGKV…VVSVATTREP (98 aa)) form the Fibronectin type-III domain. ANK repeat units lie at residues 109-139 (ISSE…MIDV), 143-172 (FGFT…DVNL), 176-205 (SGKD…SWEA), 209-238 (GGCT…EVDV), 243-273 (SGWT…DVNI), and 277-306 (DGKT…DATV).

As to quaternary structure, interacts with COPS5; regulates the phosphorylation of JUN and the transcriptional activity of AP-1. Interacts with RYBP; may prevent the ubiquitin-mediated proteasomal degradation of FANK1. Polyubiquitinated. Polyubiquitination leads to proteasomal degradation. As to expression, mostly restricted to testis (at protein level), including mid to late pachytene spermatocytes (stages VI-X), diplotene spermatocytes (stage XI), meiotically dividing spermatocytes (stage XII) and spermatids in steps 1-14. Highest levels in late pachytene spermatocytes and spermatids in steps 1-9.

It localises to the nucleus. It is found in the cytoplasm. Its subcellular location is the cytosol. The protein localises to the cytoskeleton. The protein resides in the cilium basal body. It localises to the cell projection. It is found in the cilium. Its function is as follows. Through the activation of JUN and AP-1-mediated transcription, may regulate apoptosis. This chain is Fibronectin type 3 and ankyrin repeat domains 1 protein, found in Mus musculus (Mouse).